We begin with the raw amino-acid sequence, 2147 residues long: Non-reducing polyketide synthase albA (2147 aa).

Residues 8-244 form an N-terminal acylcarrier protein transacylase domain (SAT) region; the sequence is YLFGDQTSDI…VKAPIHGPYH (237 aa). A Ketosynthase family 3 (KS3) domain is found at 375-806; sequence CSKIAIIGMS…GGNTAILLED (432 aa). Residues cysteine 547, histidine 682, and histidine 724 each act as for beta-ketoacyl synthase activity in the active site. Residues 912-1232 are malonyl-CoA:ACP transacylase (MAT) domain; sequence FVFTGQGAQY…LSSLHLAGID (321 aa). Serine 1001 functions as the For acyl/malonyl transferase activity in the catalytic mechanism. The interval 1286 to 1425 is N-terminal hotdog fold; the sequence is HEFLTTAAQK…CTVRFFDCAA (140 aa). The 313-residue stretch at 1286 to 1598 folds into the PKS/mFAS DH domain; sequence HEFLTTAAQK…FQGLSRKILD (313 aa). Positions 1290–1603 are product template (PT) domain; it reads TTAAQKVIET…RKILDTVLPP (314 aa). The active-site Proton acceptor; for dehydratase activity is histidine 1326. The C-terminal hotdog fold stretch occupies residues 1452-1598; that stretch reads DAHRLGRGMV…FQGLSRKILD (147 aa). The active-site Proton donor; for dehydratase activity is the aspartate 1511. The segment at 1608–1637 is disordered; it reads KGPARPAASAQKAAPAATSKSRASAPAPAK. The segment covering 1610–1637 has biased composition (low complexity); it reads PARPAASAQKAAPAATSKSRASAPAPAK. A Carrier 1 domain is found at 1642–1719; that stretch reads PSAPSLVKRA…DFKQFLAPMS (78 aa). Serine 1679 bears the O-(pantetheine 4'-phosphoryl)serine mark. The tract at residues 1719–1759 is disordered; sequence SQGEASDGSTSDPESSSSFNGGSSTDESSAGSPVSSPPNEK. Over residues 1724-1747 the composition is skewed to low complexity; the sequence is SDGSTSDPESSSSFNGGSSTDESS. The 78-residue stretch at 1760–1837 folds into the Carrier 2 domain; the sequence is IEQHATMKEI…DVEDALGLKP (78 aa). O-(pantetheine 4'-phosphoryl)serine is present on serine 1797. A claisen cyclase domain region spans residues 1873-2145; the sequence is SPHPRSTSIL…ELGSFIGNAM (273 aa). Residue serine 1963 is the For Claisen cyclase activity of the active site.

It catalyses the reaction 6 malonyl-CoA + acetyl-CoA + 6 H(+) = naphtopyrone YWA1 + 6 CO2 + 7 CoA + H2O. It participates in secondary metabolite biosynthesis. In terms of biological role, non-reducing polyketide synthase involved in the biosynthesis of bifonsecin B, a dimeric gamma-naphthopyrone. The first step in the biosynthesis of bifonsecin B is the production of gamma-naphthopyrone precursor YWA1 by the non-reducing polyketide synthase albA, via condensation of one acetyl-CoA starter unit with 6 malonyl-CoA units. YWA1 is then methylated by bfoE at position C-6 to yield foncesin which is further methylated at position C-8 by bfoD to produce fonsecin B. A key enzyme in the biosynthetic pathway is the cytochrome P450 monooxygenase bfoB which catalyzes the oxidative dimerization of fonsecin B to bifonsecin B. Bfob also catalyzes the oxidative dimerization of rubrofusarin B into nigerone. The stereoselectivity of bfoB is influenced by the two natural monomeric substrates; homodimerization of fonsecin B yields a stereochemically pure biaryl, M-foncerine B, while rubrofusarin B yields a mixture of enantiomers M- and P-nigerone. This chain is Non-reducing polyketide synthase albA, found in Aspergillus brasiliensis (strain CBS 101740 / IMI 381727 / IBT 21946).